Here is a 610-residue protein sequence, read N- to C-terminus: UvrABC system protein C (610 aa).

The GIY-YIG domain maps to 13-91 (HLPGVYRMYD…IKENQPKYNV (79 aa)). Residues 201–236 (GQVIEHLVQKMENAAQELDFEAAARFRDQIQSVRAV) enclose the UVR domain.

This sequence belongs to the UvrC family. As to quaternary structure, interacts with UvrB in an incision complex.

It is found in the cytoplasm. Its function is as follows. The UvrABC repair system catalyzes the recognition and processing of DNA lesions. UvrC both incises the 5' and 3' sides of the lesion. The N-terminal half is responsible for the 3' incision and the C-terminal half is responsible for the 5' incision. The protein is UvrABC system protein C of Actinobacillus pleuropneumoniae serotype 3 (strain JL03).